The following is a 65-amino-acid chain: Large ribosomal subunit protein uL29 (65 aa).

This sequence belongs to the universal ribosomal protein uL29 family.

The protein is Large ribosomal subunit protein uL29 of Paracidovorax citrulli (strain AAC00-1) (Acidovorax citrulli).